The sequence spans 705 residues: Translation initiation factor IF-2 (705 aa).

The segment at 40 to 124 is disordered; the sequence is DDQIKALDKK…QPAAPKEIPS (85 aa). Over residues 41-58 the composition is skewed to basic and acidic residues; it reads DQIKALDKKFKKEQKNDN. The span at 59–77 shows a compositional bias: low complexity; it reads KQSTQNNHQKSNNQNQNKG. Over residues 94 to 108 the composition is skewed to basic residues; the sequence is KGNKKNNRNNKKNNK. One can recognise a tr-type G domain in the interval 207–376; sequence ERPAVVTIMG…GLVAEVQELK (170 aa). The tract at residues 216 to 223 is G1; sequence GHVDHGKT. 216–223 is a binding site for GTP; the sequence is GHVDHGKT. Residues 241–245 are G2; it reads GITQH. The G3 stretch occupies residues 262–265; sequence DTPG. Residues 262 to 266 and 316 to 319 each bind GTP; these read DTPGH and NKID. Positions 316–319 are G4; sequence NKID. The segment at 352–354 is G5; sequence SAL.

Belongs to the TRAFAC class translation factor GTPase superfamily. Classic translation factor GTPase family. IF-2 subfamily.

It is found in the cytoplasm. In terms of biological role, one of the essential components for the initiation of protein synthesis. Protects formylmethionyl-tRNA from spontaneous hydrolysis and promotes its binding to the 30S ribosomal subunits. Also involved in the hydrolysis of GTP during the formation of the 70S ribosomal complex. The sequence is that of Translation initiation factor IF-2 from Staphylococcus aureus (strain USA300).